The sequence spans 578 residues: Translation initiation factor eIF2B subunit gamma (578 aa).

Residues Ser296 and Ser300 each carry the phosphoserine modification. 2 disordered regions span residues 298 to 337 and 535 to 578; these read QASFKDPFTGNQQQQNPPTTDDDEDRNHDDDDDYKPSATS and DDSV…LFER. A Phosphothreonine modification is found at Thr306. The segment covering 544 to 578 has biased composition (acidic residues); it reads EIAEETDSDDRSDEDSDDSEYTDEYEYEDDGLFER.

The protein belongs to the eIF-2B gamma/epsilon subunits family. As to quaternary structure, component of the translation initiation factor 2B (eIF2B) complex which is a heterodecamer of two sets of five different subunits: alpha, beta, gamma, delta and epsilon. Subunits alpha, beta and delta comprise a regulatory subcomplex and subunits epsilon and gamma comprise a catalytic subcomplex. Within the complex, the hexameric regulatory complex resides at the center, with the two heterodimeric catalytic subcomplexes bound on opposite sides.

Its subcellular location is the cytoplasm. The protein localises to the cytosol. Functionally, acts as a component of the translation initiation factor 2B (eIF2B) complex, which catalyzes the exchange of GDP for GTP on the eukaryotic initiation factor 2 (eIF2) complex gamma subunit. Its guanine nucleotide exchange factor activity is repressed when bound to eIF2 complex phosphorylated on the alpha subunit, thereby limiting the amount of methionyl-initiator methionine tRNA available to the ribosome and consequently global translation is repressed. It activates the synthesis of GCN4 in yeast under amino acid starvation conditions by suppressing the inhibitory effects of multiple AUG codons present in the leader of GCN4 mRNA. It may promote either repression or activation of GCN4 expression depending on amino acid availability. GCD1 stabilizes the interaction between eIF2 and GCD6 and stimulates the catalytic activity in vitro. This chain is Translation initiation factor eIF2B subunit gamma (GCD1), found in Saccharomyces cerevisiae (strain ATCC 204508 / S288c) (Baker's yeast).